A 96-amino-acid polypeptide reads, in one-letter code: uncharacterized protein (96 aa).

This is an uncharacterized protein from Enterobacteria phage T4 (Bacteriophage T4).